We begin with the raw amino-acid sequence, 385 residues long: Tryptophan--tRNA ligase (385 aa).

Residues 82-90 carry the 'HIGH' region motif; it reads PSGPMHIGH. Positions 253-257 match the 'KMSKS' region motif; sequence KMSAS.

The protein belongs to the class-I aminoacyl-tRNA synthetase family.

Its subcellular location is the cytoplasm. The enzyme catalyses tRNA(Trp) + L-tryptophan + ATP = L-tryptophyl-tRNA(Trp) + AMP + diphosphate + H(+). The chain is Tryptophan--tRNA ligase from Pyrococcus abyssi (strain GE5 / Orsay).